A 505-amino-acid chain; its full sequence is N-succinylglutamate 5-semialdehyde dehydrogenase (505 aa).

Residue 234 to 239 (GSAHTG) participates in NAD(+) binding. Residues E257 and C291 contribute to the active site.

It belongs to the aldehyde dehydrogenase family. AstD subfamily.

It catalyses the reaction N-succinyl-L-glutamate 5-semialdehyde + NAD(+) + H2O = N-succinyl-L-glutamate + NADH + 2 H(+). The protein operates within amino-acid degradation; L-arginine degradation via AST pathway; L-glutamate and succinate from L-arginine: step 4/5. Functionally, catalyzes the NAD-dependent reduction of succinylglutamate semialdehyde into succinylglutamate. The sequence is that of N-succinylglutamate 5-semialdehyde dehydrogenase from Yersinia pestis (strain Pestoides F).